The sequence spans 100 residues: Carboxysome shell vertex protein CcmL (100 aa).

The region spanning 1–83 is the BMV domain; that stretch reads MQIGRVRGTV…VDAVVIGIID (83 aa).

Belongs to the CcmL/EutN family. CcmL subfamily. In terms of assembly, homopentamer. Interacts with full-length CcmM.

The protein resides in the carboxysome. In terms of biological role, probably forms vertices in the carboxysome, a polyhedral inclusion where RuBisCO (ribulose bisphosphate carboxylase, rbcL-rbcS) is sequestered. Has been modeled to induce curvature upon insertion into an otherwise flat hexagonal molecular layer of CcmK subunits. The polypeptide is Carboxysome shell vertex protein CcmL (Gloeobacter violaceus (strain ATCC 29082 / PCC 7421)).